A 74-amino-acid polypeptide reads, in one-letter code: Large ribosomal subunit protein bL31 (74 aa).

Residues cysteine 16, cysteine 18, cysteine 37, and cysteine 40 each contribute to the Zn(2+) site.

Belongs to the bacterial ribosomal protein bL31 family. Type A subfamily. Part of the 50S ribosomal subunit. Requires Zn(2+) as cofactor.

In terms of biological role, binds the 23S rRNA. The sequence is that of Large ribosomal subunit protein bL31 from Koribacter versatilis (strain Ellin345).